A 425-amino-acid chain; its full sequence is MVSLSVLLRGGLVLYGRDYKLTRADVLIEGDKIVEVKRNINKPADEVLDVSKSLVIPSFINAHTHSPMVILRGLAEDVPLMEWLQEYIWPVERKLRRKDVYWGSKLALIEMAHSGTSTFVDMYFHMEEIAKATEEVGLRAYLGYGMVDLDDEEKRKIEMRETEKLYEFIKKLDSSKVNFILAPHAPYTCSFDCLRWVSEKSREWNSLVTIHLAETQDEIKIIREKYGKSPVDVLEDVGLLNEKLIAAHGIWLSDEDIRKISSAGATIAHCPASNMKLGSGVFPMKKALENNVNVALGTDGAASNNTLDILREMRLASLLQKVIHRDPSIVKSEDIFRMATLNGAKALGLKAGVIAEGYLADIAVIDLRKAHLLPVNSPLASIIFSARGGDVDTLIVGGEIVMLDSELLTVDEEKVIDKFLEVSVA.

Positions 63 and 65 each coordinate Zn(2+). 2 residues coordinate substrate: glutamate 92 and histidine 184. Residue histidine 211 coordinates Zn(2+). 2 residues coordinate substrate: glutamate 214 and aspartate 299. Aspartate 299 serves as a coordination point for Zn(2+).

This sequence belongs to the metallo-dependent hydrolases superfamily. MTA/SAH deaminase family. Zn(2+) is required as a cofactor.

It catalyses the reaction S-adenosyl-L-homocysteine + H2O + H(+) = S-inosyl-L-homocysteine + NH4(+). The catalysed reaction is S-methyl-5'-thioadenosine + H2O + H(+) = S-methyl-5'-thioinosine + NH4(+). Its function is as follows. Catalyzes the deamination of 5-methylthioadenosine and S-adenosyl-L-homocysteine into 5-methylthioinosine and S-inosyl-L-homocysteine, respectively. Is also able to deaminate adenosine. This chain is 5-methylthioadenosine/S-adenosylhomocysteine deaminase, found in Pyrococcus abyssi (strain GE5 / Orsay).